A 61-amino-acid chain; its full sequence is Large ribosomal subunit protein bL28 (61 aa).

Belongs to the bacterial ribosomal protein bL28 family.

In Geobacillus stearothermophilus (Bacillus stearothermophilus), this protein is Large ribosomal subunit protein bL28 (rpmB).